A 364-amino-acid chain; its full sequence is tRNA-specific 2-thiouridylase MnmA (364 aa).

ATP contacts are provided by residues 13–20 and Met-39; that span reads GMSGGVDS. An interaction with target base in tRNA region spans residues 99–101; it reads NPD. The active-site Nucleophile is Cys-104. Cys-104 and Cys-200 are joined by a disulfide. Gly-128 is a binding site for ATP. The interval 150–152 is interaction with tRNA; the sequence is KDQ. Cys-200 (cysteine persulfide intermediate) is an active-site residue. The interaction with tRNA stretch occupies residues 310-311; the sequence is RY.

Belongs to the MnmA/TRMU family.

It is found in the cytoplasm. It carries out the reaction S-sulfanyl-L-cysteinyl-[protein] + uridine(34) in tRNA + AH2 + ATP = 2-thiouridine(34) in tRNA + L-cysteinyl-[protein] + A + AMP + diphosphate + H(+). Functionally, catalyzes the 2-thiolation of uridine at the wobble position (U34) of tRNA, leading to the formation of s(2)U34. This is tRNA-specific 2-thiouridylase MnmA from Alkaliphilus oremlandii (strain OhILAs) (Clostridium oremlandii (strain OhILAs)).